Reading from the N-terminus, the 220-residue chain is Thioredoxin domain-containing protein (220 aa).

The first 19 residues, 1-19 (MKFLILNCLILFSLISSEA), serve as a signal peptide directing secretion. A Thioredoxin domain is found at 20 to 141 (TNVKLDREDQ…SEFALGDFKN (122 aa)). The Lumenal segment spans residues 20-181 (TNVKLDREDQ…YDAALAGFVT (162 aa)). C64 and C67 form a disulfide bridge. Residues 182 to 202 (ISSFSFLFGLLVGLMLSLFLF) traverse the membrane as a helical segment. Topologically, residues 203-220 (TRRATRKPKVLTERKKDK) are cytoplasmic. Residues 217 to 220 (KKDK) carry the Di-lysine motif motif.

This sequence belongs to the protein disulfide isomerase family.

The protein localises to the endoplasmic reticulum membrane. This chain is Thioredoxin domain-containing protein, found in Theileria parva (East coast fever infection agent).